Consider the following 195-residue polypeptide: Shikimate kinase (195 aa).

26–31 serves as a coordination point for ATP; the sequence is GSGKST. Ser30 provides a ligand contact to Mg(2+). Residues Asp48, Arg72, and Gly94 each coordinate substrate. Arg132 lines the ATP pocket. Arg151 is a substrate binding site.

It belongs to the shikimate kinase family. Monomer. Mg(2+) serves as cofactor.

Its subcellular location is the cytoplasm. The enzyme catalyses shikimate + ATP = 3-phosphoshikimate + ADP + H(+). It participates in metabolic intermediate biosynthesis; chorismate biosynthesis; chorismate from D-erythrose 4-phosphate and phosphoenolpyruvate: step 5/7. Its function is as follows. Catalyzes the specific phosphorylation of the 3-hydroxyl group of shikimic acid using ATP as a cosubstrate. In Synechococcus sp. (strain RCC307), this protein is Shikimate kinase.